The following is a 1295-amino-acid chain: Phosphoribosylformylglycinamidine synthase (1295 aa).

The tract at residues tryptophan 305–lysine 327 is disordered. ATP is bound by residues glycine 307–aspartate 318, threonine 386–tyrosine 388, and alanine 678. Residues aspartate 679, glutamate 718, asparagine 722, and aspartate 884 each contribute to the Mg(2+) site. Serine 886 provides a ligand contact to ATP. A Glutamine amidotransferase type-1 domain is found at lysine 1041–glycine 1295. The Nucleophile role is filled by cysteine 1135. Catalysis depends on residues histidine 1260 and glutamate 1262.

In the N-terminal section; belongs to the FGAMS family. In terms of assembly, monomer.

The protein localises to the cytoplasm. It catalyses the reaction N(2)-formyl-N(1)-(5-phospho-beta-D-ribosyl)glycinamide + L-glutamine + ATP + H2O = 2-formamido-N(1)-(5-O-phospho-beta-D-ribosyl)acetamidine + L-glutamate + ADP + phosphate + H(+). Its pathway is purine metabolism; IMP biosynthesis via de novo pathway; 5-amino-1-(5-phospho-D-ribosyl)imidazole from N(2)-formyl-N(1)-(5-phospho-D-ribosyl)glycinamide: step 1/2. Functionally, phosphoribosylformylglycinamidine synthase involved in the purines biosynthetic pathway. Catalyzes the ATP-dependent conversion of formylglycinamide ribonucleotide (FGAR) and glutamine to yield formylglycinamidine ribonucleotide (FGAM) and glutamate. This is Phosphoribosylformylglycinamidine synthase from Salmonella choleraesuis (strain SC-B67).